A 164-amino-acid polypeptide reads, in one-letter code: Lipoprotein signal peptidase (164 aa).

Helical transmembrane passes span 6–26 (LGILTAVIALALDQATKLWLL), 39–59 (VTSFFDLVLAWNTGISYGWFA), 65–85 (GQILMLAFKAVAIVALAIWMA), and 88–108 (TTKLATIGLGLIIGGAIGNAI). Active-site residues include aspartate 118 and aspartate 140. A helical transmembrane segment spans residues 141–161 (VAIVVGVVALLYDSLIGAPAV).

The protein belongs to the peptidase A8 family.

The protein resides in the cell inner membrane. The enzyme catalyses Release of signal peptides from bacterial membrane prolipoproteins. Hydrolyzes -Xaa-Yaa-Zaa-|-(S,diacylglyceryl)Cys-, in which Xaa is hydrophobic (preferably Leu), and Yaa (Ala or Ser) and Zaa (Gly or Ala) have small, neutral side chains.. It functions in the pathway protein modification; lipoprotein biosynthesis (signal peptide cleavage). In terms of biological role, this protein specifically catalyzes the removal of signal peptides from prolipoproteins. In Rhodopseudomonas palustris (strain TIE-1), this protein is Lipoprotein signal peptidase.